Reading from the N-terminus, the 159-residue chain is ATP synthase subunit b (159 aa).

A helical membrane pass occupies residues 2–22 (EFNLVTIGFTIVNFIILMLIL).

The protein belongs to the ATPase B chain family. As to quaternary structure, F-type ATPases have 2 components, F(1) - the catalytic core - and F(0) - the membrane proton channel. F(1) has five subunits: alpha(3), beta(3), gamma(1), delta(1), epsilon(1). F(0) has three main subunits: a(1), b(2) and c(10-14). The alpha and beta chains form an alternating ring which encloses part of the gamma chain. F(1) is attached to F(0) by a central stalk formed by the gamma and epsilon chains, while a peripheral stalk is formed by the delta and b chains.

It localises to the cell membrane. Its function is as follows. F(1)F(0) ATP synthase produces ATP from ADP in the presence of a proton or sodium gradient. F-type ATPases consist of two structural domains, F(1) containing the extramembraneous catalytic core and F(0) containing the membrane proton channel, linked together by a central stalk and a peripheral stalk. During catalysis, ATP synthesis in the catalytic domain of F(1) is coupled via a rotary mechanism of the central stalk subunits to proton translocation. Functionally, component of the F(0) channel, it forms part of the peripheral stalk, linking F(1) to F(0). In Clostridium acetobutylicum (strain ATCC 824 / DSM 792 / JCM 1419 / IAM 19013 / LMG 5710 / NBRC 13948 / NRRL B-527 / VKM B-1787 / 2291 / W), this protein is ATP synthase subunit b.